The chain runs to 166 residues: uncharacterized protein (166 aa).

Low complexity predominate over residues 73-88 (SKLNNNNNSNNNNKMA). Disordered regions lie at residues 73–101 (SKLN…EKDK) and 126–166 (PQSS…EFNN). Positions 89–101 (VDNKDNKDNEKDK) are enriched in basic and acidic residues. The segment covering 134–154 (SPTHKSPSSSPKTISPVKVSP) has biased composition (low complexity). The span at 155 to 166 (TSSPIKNPEFNN) shows a compositional bias: polar residues.

This is an uncharacterized protein from Dictyostelium discoideum (Social amoeba).